We begin with the raw amino-acid sequence, 465 residues long: MSSSVVAETVPSGSGSWFSHFKATLVLGIPLIGAQLAQLGIHTTDMVIVGQLGAEKLAAMVLAGQFFFVVFIFGSGFSVAVVPMVAQAYGQGDATSARRSLRMGMWVAIAYWLLALPIFFNAERILVYLGQNPNVAALTGHYLAIAKFGLLPALLFYVLRGLVSAIGRAGIILYVTIIMLVMNGLMAYVLVFGHFGLPAMGMNGAAVVAVIVNAFSFIFIVAYVQTREETKKYELFVRFWRPDWHALFEVLRLGLPISITILAEVTLFAAASILMGQIGTVQLAAHGIALQLASIAFMIPLGLSQAATVRVGVARGQGDFKNLIRASIMIYAIACGIALCGGILFAAVPEFLAKWFLDPKLPEAAEVLAYASSLVVIAGIFQLVDGIQAVTAGLLRGLKDARIPAMLALISYWPIGLALAWTMAFPLGFGGRGVWFGFVIGLSTAAVLLTVRFVLLVKREMKTAR.

Transmembrane regions (helical) follow at residues 61–83 (VLAG…AVVP), 104–126 (GMWV…ERIL), 141–163 (HYLA…RGLV), 170–192 (GIIL…VLVF), 202–224 (MNGA…VAYV), 251–273 (LRLG…AASI), 283–305 (LAAH…GLSQ), 326–348 (ASIM…FAAV), 368–390 (LAYA…IQAV), 403–425 (IPAM…TMAF), and 435–457 (WFGF…VLLV).

It belongs to the multi antimicrobial extrusion (MATE) (TC 2.A.66.1) family.

The protein localises to the cell inner membrane. Functionally, multidrug efflux pump. In Agrobacterium fabrum (strain C58 / ATCC 33970) (Agrobacterium tumefaciens (strain C58)), this protein is Probable multidrug resistance protein NorM (norM).